Reading from the N-terminus, the 615-residue chain is Nuclear cap-binding protein subunit 3 (615 aa).

Lys-12 participates in a covalent cross-link: Glycyl lysine isopeptide (Lys-Gly) (interchain with G-Cter in SUMO2). The segment covering 15-27 (APAGPALGLPSPE) has biased composition (low complexity). A disordered region spans residues 15–43 (APAGPALGLPSPEVESGLERGEPEPMEVE). Ser-25 carries the post-translational modification Phosphoserine. Residue Lys-70 forms a Glycyl lysine isopeptide (Lys-Gly) (interchain with G-Cter in SUMO2) linkage. Ser-73 carries the phosphoserine modification. Positions 126 to 187 (ETIYICGVDE…MSSLPAQDKM (62 aa)) are RNA recognition motif (RRM) domain. The WLDD motif; essential for 7-methylguanosine-containing mRNA cap binding motif lies at 155 to 158 (WLDD). Disordered stretches follow at residues 182–233 (PAQD…LDTL) and 332–400 (HSGL…MDYD). The segment covering 185 to 208 (DKMRSRDASEDKSSEKNKKDKQED) has biased composition (basic and acidic residues). Lys-186 is covalently cross-linked (Glycyl lysine isopeptide (Lys-Gly) (interchain with G-Cter in SUMO2)). 2 positions are modified to phosphoserine: Ser-209 and Ser-210. Acidic residues-rich tracts occupy residues 209–230 (SSDDDETEEGEVEDENSSDVEL) and 341–360 (EPIEEEEEEEEEEEDQDMDA). Over residues 361–383 (DDRVVVEYHEELPGLKQPRERSL) the composition is skewed to basic and acidic residues. The residue at position 408 (Thr-408) is a Phosphothreonine. Position 410 is a phosphoserine (Ser-410). Disordered regions lie at residues 430–454 (SIRNPMRADSISTSNIKNRIGNKLP) and 467–615 (EKRQ…EAES). The span at 506 to 516 (VRREPSSDVHS) shows a compositional bias: basic and acidic residues. A Glycyl lysine isopeptide (Lys-Gly) (interchain with G-Cter in SUMO2) cross-link involves residue Lys-536. Composition is skewed to basic and acidic residues over residues 549–564 (KTKEKNTKKVDHRASG) and 580–593 (IKEKEESRQKKSRL). Phosphoserine is present on Ser-563. Positions 606 to 615 (ESSSGSEAES) are enriched in low complexity. Position 615 is a phosphoserine (Ser-615).

Belongs to the NCBP3 family. As to quaternary structure, component of an alternative cap-binding complex (CBC) composed of NCBP1/CBP80 and NCBP3. Interacts with SRRT, KPNA3, THOC5 and EIF4A3.

It is found in the nucleus. Its subcellular location is the cytoplasm. In terms of biological role, associates with NCBP1/CBP80 to form an alternative cap-binding complex (CBC) which plays a key role in mRNA export. NCBP3 serves as adapter protein linking the capped RNAs (m7GpppG-capped RNA) to NCBP1/CBP80. Unlike the conventional CBC with NCBP2 which binds both small nuclear RNA (snRNA) and messenger (mRNA) and is involved in their export from the nucleus, the alternative CBC with NCBP3 does not bind snRNA and associates only with mRNA thereby playing a role in only mRNA export. The alternative CBC is particularly important in cellular stress situations such as virus infections and the NCBP3 activity is critical to inhibit virus growth. This is Nuclear cap-binding protein subunit 3 from Mus musculus (Mouse).